A 52-amino-acid chain; its full sequence is Insulin (52 aa).

3 cysteine pairs are disulfide-bonded: C7/C38, C19/C51, and C37/C42.

Belongs to the insulin family. As to quaternary structure, heterodimer of a B chain and an A chain linked by two disulfide bonds.

The protein localises to the secreted. Its function is as follows. Insulin decreases blood glucose concentration. It increases cell permeability to monosaccharides, amino acids and fatty acids. It accelerates glycolysis, the pentose phosphate cycle, and glycogen synthesis in liver. The polypeptide is Insulin (ins) (Acipenser gueldenstaedtii (Russian sturgeon)).